The following is a 461-amino-acid chain: GTPase Der (461 aa).

2 consecutive EngA-type G domains span residues 9–171 (KTIA…NLNK) and 200–371 (IQVG…ECFS). GTP contacts are provided by residues 15–22 (GQPNVGKS), 62–66 (DTGGM), 123–126 (NKID), 206–213 (GRVNVGKS), 253–257 (DTAGI), and 317–320 (NKWD). Positions 372–456 (KRIPTSLLNS…PLILNAKDKK (85 aa)) constitute a KH-like domain.

This sequence belongs to the TRAFAC class TrmE-Era-EngA-EngB-Septin-like GTPase superfamily. EngA (Der) GTPase family. Associates with the 50S ribosomal subunit.

Its function is as follows. GTPase that plays an essential role in the late steps of ribosome biogenesis. This is GTPase Der from Helicobacter pylori (strain HPAG1).